A 73-amino-acid polypeptide reads, in one-letter code: Large ribosomal subunit protein bL27c (73 aa).

Belongs to the bacterial ribosomal protein bL27 family.

The protein resides in the plastid. Its subcellular location is the chloroplast. This chain is Large ribosomal subunit protein bL27c (rpl27), found in Chrysochromulina alifera (Plankton alga).